A 718-amino-acid chain; its full sequence is Polyribonucleotide nucleotidyltransferase (718 aa).

Residues aspartate 487 and aspartate 493 each contribute to the Mg(2+) site. Positions 554 to 613 (PRIETFKIPTDKIREVIGTGGKVIREIVEKTGAKVNIEDDGTVKVASSDGESIKAAIKWI) constitute a KH domain. In terms of domain architecture, S1 motif spans 623–691 (GEIYEGTVVK…DRGKTRLSMK (69 aa)). Residues 692 to 718 (VVDQETGEDLEAKQKAEGDAPREAAGE) form a disordered region. Basic and acidic residues predominate over residues 701 to 718 (LEAKQKAEGDAPREAAGE).

Belongs to the polyribonucleotide nucleotidyltransferase family. It depends on Mg(2+) as a cofactor.

Its subcellular location is the cytoplasm. It catalyses the reaction RNA(n+1) + phosphate = RNA(n) + a ribonucleoside 5'-diphosphate. Its function is as follows. Involved in mRNA degradation. Catalyzes the phosphorolysis of single-stranded polyribonucleotides processively in the 3'- to 5'-direction. This is Polyribonucleotide nucleotidyltransferase from Nitrobacter winogradskyi (strain ATCC 25391 / DSM 10237 / CIP 104748 / NCIMB 11846 / Nb-255).